Reading from the N-terminus, the 151-residue chain is Small ribosomal subunit protein uS19 (151 aa).

This sequence belongs to the universal ribosomal protein uS19 family.

Functionally, protein S19 forms a complex with S13 that binds strongly to the 16S ribosomal RNA. The protein is Small ribosomal subunit protein uS19 (rps19) of Thermoplasma acidophilum (strain ATCC 25905 / DSM 1728 / JCM 9062 / NBRC 15155 / AMRC-C165).